The chain runs to 369 residues: Beta-1,4-galactosyltransferase 2 (369 aa).

At 1 to 15 (MSRLLGGTLERVCKA) the chain is on the cytoplasmic side. Residues 16–36 (VLLLCLLHFLVAVILYFDVYA) form a helical; Signal-anchor for type II membrane protein membrane-spanning segment. Topologically, residues 37–369 (QHLAFFSRFS…GQPMSWLTQG (333 aa)) are lumenal. Over residues 58-73 (ASSSTNCSRPNATAAS) the composition is skewed to polar residues. The interval 58–90 (ASSSTNCSRPNATAASSGLPEVPSARPGPTAPV) is disordered. Residues Asn-63 and Asn-68 are each glycosylated (N-linked (GlcNAc...) asparagine). Cys-94 and Cys-136 form a disulfide bridge. Residues 147 to 151 (PFRHR), 186 to 188 (FNR), 214 to 215 (VD), and Trp-275 contribute to the UDP-alpha-D-galactose site. Cysteines 208 and 227 form a disulfide. Residue Asp-215 participates in Mn(2+) binding. Position 277 to 280 (277 to 280 (GEDD)) interacts with N-acetyl-D-glucosamine. His-308 is a binding site for Mn(2+). 308-310 (HDR) contacts UDP-alpha-D-galactose. Arg-320 provides a ligand contact to N-acetyl-D-glucosamine. Residue Asn-354 is glycosylated (N-linked (GlcNAc...) asparagine).

This sequence belongs to the glycosyltransferase 7 family. The cofactor is Mn(2+).

It localises to the golgi apparatus. It is found in the golgi stack membrane. It catalyses the reaction D-glucose + UDP-alpha-D-galactose = lactose + UDP + H(+). The catalysed reaction is an N-acetyl-beta-D-glucosaminyl derivative + UDP-alpha-D-galactose = a beta-D-galactosyl-(1-&gt;4)-N-acetyl-beta-D-glucosaminyl derivative + UDP + H(+). The enzyme catalyses N-acetyl-D-glucosamine + UDP-alpha-D-galactose = beta-D-galactosyl-(1-&gt;4)-N-acetyl-D-glucosamine + UDP + H(+). It participates in protein modification; protein glycosylation. Its function is as follows. Responsible for the synthesis of complex-type N-linked oligosaccharides in many glycoproteins as well as the carbohydrate moieties of glycolipids. Can produce lactose. The polypeptide is Beta-1,4-galactosyltransferase 2 (Mus musculus (Mouse)).